The following is a 319-amino-acid chain: Geranylgeranyl pyrophosphate synthase (319 aa).

Residues Lys42, Arg45, and His74 each contribute to the isopentenyl diphosphate site. Asp81 and Asp85 together coordinate Mg(2+). Arg90 contributes to the dimethylallyl diphosphate binding site. Arg91 provides a ligand contact to isopentenyl diphosphate. Positions 172, 173, 210, 226, and 236 each coordinate dimethylallyl diphosphate.

It belongs to the FPP/GGPP synthase family. As to quaternary structure, homodimer. The cofactor is Mg(2+).

It catalyses the reaction isopentenyl diphosphate + dimethylallyl diphosphate = (2E)-geranyl diphosphate + diphosphate. The enzyme catalyses isopentenyl diphosphate + (2E)-geranyl diphosphate = (2E,6E)-farnesyl diphosphate + diphosphate. The catalysed reaction is isopentenyl diphosphate + (2E,6E)-farnesyl diphosphate = (2E,6E,10E)-geranylgeranyl diphosphate + diphosphate. The protein operates within isoprenoid biosynthesis; geranyl diphosphate biosynthesis; geranyl diphosphate from dimethylallyl diphosphate and isopentenyl diphosphate: step 1/1. Its pathway is isoprenoid biosynthesis; farnesyl diphosphate biosynthesis; farnesyl diphosphate from geranyl diphosphate and isopentenyl diphosphate: step 1/1. It functions in the pathway isoprenoid biosynthesis; geranylgeranyl diphosphate biosynthesis; geranylgeranyl diphosphate from farnesyl diphosphate and isopentenyl diphosphate: step 1/1. Its function is as follows. Catalyzes the addition of 3 molecules of isopentenyl diphosphate (IPP) onto dimethylallyl diphosphate (DMAPP) to form geranylgeranyl pyrophosphate (GGPP). Catalyzes the synthesis of geranylgeranyl pyrophosphate as a major product and of farnesyl pyrophosphate in smaller amounts. The polypeptide is Geranylgeranyl pyrophosphate synthase (Geoglobus acetivorans).